A 397-amino-acid chain; its full sequence is Phosphoglycerate kinase (397 aa).

Residues 21–23, R37, 60–63, R119, and R152 contribute to the substrate site; these read DFN and HLGR. ATP contacts are provided by residues K203, G294, E325, and 354 to 357; that span reads GGDS.

This sequence belongs to the phosphoglycerate kinase family. As to quaternary structure, monomer.

Its subcellular location is the cytoplasm. The catalysed reaction is (2R)-3-phosphoglycerate + ATP = (2R)-3-phospho-glyceroyl phosphate + ADP. It functions in the pathway carbohydrate degradation; glycolysis; pyruvate from D-glyceraldehyde 3-phosphate: step 2/5. The sequence is that of Phosphoglycerate kinase from Chlorobium phaeobacteroides (strain DSM 266 / SMG 266 / 2430).